We begin with the raw amino-acid sequence, 55 residues long: Small integral membrane protein 11 (55 aa).

Residues 9 to 29 (VPLLLYILAAKTLILCLAFAG) traverse the membrane as a helical segment. Residues 34-54 (QRRSLEGKLQAEKRKQSEKKA) are a coiled coil.

As to expression, expressed in brain, heart, kidney, thymus, liver, stomach, muscle, lung, testis, ovary, skin and eye.

It is found in the membrane. This chain is Small integral membrane protein 11, found in Mus musculus (Mouse).